The sequence spans 218 residues: Antifreeze protein Maxi (218 aa).

Residues 1–23 (MALSLFTVGQFIFLFWTISITEA) form the signal peptide.

This sequence belongs to the type-I AFP family. As to quaternary structure, homodimer. In terms of tissue distribution, detected in blood serum (at protein level). Detected in liver.

The protein localises to the secreted. Contributes to protect fish blood from freezing at subzero sea water temperatures. Lowers the blood freezing point by about 1.1 degrees at a concentration of 0.1 mg/ml, and by about 1.5 degrees at a concentration of 0.2 mg/ml. Binds to nascent ice crystals and prevents further growth. The sequence is that of Antifreeze protein Maxi from Pseudopleuronectes americanus (Winter flounder).